Reading from the N-terminus, the 318-residue chain is Isoflavone reductase (318 aa).

Residues 11–17 (GPTGAIG), arginine 36, and lysine 44 each bind NADP(+). Catalysis depends on lysine 144, which acts as the Proton acceptor. An NADP(+)-binding site is contributed by arginine 148.

The protein belongs to the NmrA-type oxidoreductase family. Isoflavone reductase subfamily.

The catalysed reaction is (3R)-vestitone + NADP(+) = 2'-hydroxyformononetin + NADPH + 2 H(+). It participates in phytoalexin biosynthesis; pterocarpan phytoalexin biosynthesis. In terms of biological role, reduces achiral isoflavones to chiral isoflavanones during the biosynthesis of chiral pterocarpan phytoalexins. The protein is Isoflavone reductase (IFR) of Cicer arietinum (Chickpea).